The chain runs to 299 residues: Acetylglutamate kinase (299 aa).

Residues 64-65 (GG), Arg-86, and Asn-197 each bind substrate.

This sequence belongs to the acetylglutamate kinase family. ArgB subfamily.

The protein localises to the cytoplasm. It carries out the reaction N-acetyl-L-glutamate + ATP = N-acetyl-L-glutamyl 5-phosphate + ADP. The protein operates within amino-acid biosynthesis; L-arginine biosynthesis; N(2)-acetyl-L-ornithine from L-glutamate: step 2/4. Its function is as follows. Catalyzes the ATP-dependent phosphorylation of N-acetyl-L-glutamate. In Sulfurihydrogenibium sp. (strain YO3AOP1), this protein is Acetylglutamate kinase.